The chain runs to 513 residues: ATP synthase subunit alpha (513 aa).

ATP is bound at residue 169 to 176 (GDRQTGKT).

The protein belongs to the ATPase alpha/beta chains family. In terms of assembly, F-type ATPases have 2 components, CF(1) - the catalytic core - and CF(0) - the membrane proton channel. CF(1) has five subunits: alpha(3), beta(3), gamma(1), delta(1), epsilon(1). CF(0) has three main subunits: a(1), b(2) and c(9-12). The alpha and beta chains form an alternating ring which encloses part of the gamma chain. CF(1) is attached to CF(0) by a central stalk formed by the gamma and epsilon chains, while a peripheral stalk is formed by the delta and b chains.

It is found in the cell inner membrane. It catalyses the reaction ATP + H2O + 4 H(+)(in) = ADP + phosphate + 5 H(+)(out). Produces ATP from ADP in the presence of a proton gradient across the membrane. The alpha chain is a regulatory subunit. This chain is ATP synthase subunit alpha, found in Hydrogenovibrio crunogenus (strain DSM 25203 / XCL-2) (Thiomicrospira crunogena).